The primary structure comprises 511 residues: Histidine ammonia-lyase (511 aa).

Residues 142-144 (ASG) constitute a cross-link (5-imidazolinone (Ala-Gly)). The residue at position 143 (S143) is a 2,3-didehydroalanine (Ser).

Belongs to the PAL/histidase family. Post-translationally, contains an active site 4-methylidene-imidazol-5-one (MIO), which is formed autocatalytically by cyclization and dehydration of residues Ala-Ser-Gly.

Its subcellular location is the cytoplasm. The catalysed reaction is L-histidine = trans-urocanate + NH4(+). Its pathway is amino-acid degradation; L-histidine degradation into L-glutamate; N-formimidoyl-L-glutamate from L-histidine: step 1/3. The chain is Histidine ammonia-lyase from Phenylobacterium zucineum (strain HLK1).